We begin with the raw amino-acid sequence, 202 residues long: Ribosomal RNA small subunit methyltransferase G (202 aa).

Residues Gly-75, Phe-80, 125 to 126, and Arg-139 each bind S-adenosyl-L-methionine; that span reads VQ.

It belongs to the methyltransferase superfamily. RNA methyltransferase RsmG family.

It localises to the cytoplasm. Its function is as follows. Specifically methylates the N7 position of a guanine in 16S rRNA. This is Ribosomal RNA small subunit methyltransferase G from Mesomycoplasma hyopneumoniae (strain J / ATCC 25934 / NCTC 10110) (Mycoplasma hyopneumoniae).